A 119-amino-acid chain; its full sequence is Nascent polypeptide-associated complex protein (119 aa).

The region spanning 5-73 (RMNSREMRRL…MREVPKEPEE (69 aa)) is the NAC-A/B domain.

This sequence belongs to the NAC-alpha family. In terms of assembly, homodimer. Interacts with the ribosome. Binds ribosomal RNA.

Its function is as follows. Contacts the emerging nascent chain on the ribosome. This is Nascent polypeptide-associated complex protein from Thermoplasma acidophilum (strain ATCC 25905 / DSM 1728 / JCM 9062 / NBRC 15155 / AMRC-C165).